Consider the following 87-residue polypeptide: Small ribosomal subunit protein uS17 (87 aa).

This sequence belongs to the universal ribosomal protein uS17 family. As to quaternary structure, part of the 30S ribosomal subunit.

Its function is as follows. One of the primary rRNA binding proteins, it binds specifically to the 5'-end of 16S ribosomal RNA. The sequence is that of Small ribosomal subunit protein uS17 from Alcanivorax borkumensis (strain ATCC 700651 / DSM 11573 / NCIMB 13689 / SK2).